The primary structure comprises 331 residues: Phospho-N-acetylmuramoyl-pentapeptide-transferase (331 aa).

9 helical membrane-spanning segments follow: residues 7-27, 54-74, 78-98, 106-126, 133-153, 154-174, 195-215, 249-269, and 311-331; these read IIYTIIIGFIITLILGPLTIP, TIGGIILIMSIIITSLTSGLI, LWIALAATVAFGIIGFIDDFI, LGLRAYQKLILQGTIAVILAI, IMGTEVIVPFVGEGITIAGFT, ITQTIDLGILYIPFIVFVVVA, IIAAFFALVAMSWGYVSLAIF, AIATIAVLMNVVLIIPIVGGI, and VVIVFWVVTVILCLVGMLALS.

This sequence belongs to the glycosyltransferase 4 family. MraY subfamily. Mg(2+) serves as cofactor.

It localises to the cell membrane. It carries out the reaction UDP-N-acetyl-alpha-D-muramoyl-L-alanyl-gamma-D-glutamyl-meso-2,6-diaminopimeloyl-D-alanyl-D-alanine + di-trans,octa-cis-undecaprenyl phosphate = di-trans,octa-cis-undecaprenyl diphospho-N-acetyl-alpha-D-muramoyl-L-alanyl-D-glutamyl-meso-2,6-diaminopimeloyl-D-alanyl-D-alanine + UMP. It functions in the pathway cell wall biogenesis; peptidoglycan biosynthesis. Catalyzes the initial step of the lipid cycle reactions in the biosynthesis of the cell wall peptidoglycan: transfers peptidoglycan precursor phospho-MurNAc-pentapeptide from UDP-MurNAc-pentapeptide onto the lipid carrier undecaprenyl phosphate, yielding undecaprenyl-pyrophosphoryl-MurNAc-pentapeptide, known as lipid I. The polypeptide is Phospho-N-acetylmuramoyl-pentapeptide-transferase (Alkaliphilus metalliredigens (strain QYMF)).